Consider the following 649-residue polypeptide: Alpha-amylase (649 aa).

Residue E124 is the Nucleophile of the active site. The Proton donor role is filled by D215.

The protein belongs to the glycosyl hydrolase 57 family. In terms of assembly, homodimer.

The catalysed reaction is Endohydrolysis of (1-&gt;4)-alpha-D-glucosidic linkages in polysaccharides containing three or more (1-&gt;4)-alpha-linked D-glucose units.. Functionally, displays a broad range of substrate specificity, with the capacity to hydrolyze carbohydrates as simple as maltotriose. This chain is Alpha-amylase (amyA), found in Pyrococcus furiosus (strain ATCC 43587 / DSM 3638 / JCM 8422 / Vc1).